The primary structure comprises 296 residues: Ribosomal RNA small subunit methyltransferase H (296 aa).

S-adenosyl-L-methionine is bound by residues 30–32 (GGH), D49, F77, D95, and Q102.

The protein belongs to the methyltransferase superfamily. RsmH family.

Its subcellular location is the cytoplasm. It catalyses the reaction cytidine(1402) in 16S rRNA + S-adenosyl-L-methionine = N(4)-methylcytidine(1402) in 16S rRNA + S-adenosyl-L-homocysteine + H(+). Specifically methylates the N4 position of cytidine in position 1402 (C1402) of 16S rRNA. This is Ribosomal RNA small subunit methyltransferase H from Hydrogenobaculum sp. (strain Y04AAS1).